A 461-amino-acid chain; its full sequence is Bifunctional enzyme LpxC/FabZ (461 aa).

The interval 1–302 is UDP-3-O-acyl-N-acetylglucosamine deacetylase; sequence MLKQKTLKDS…FARQMRKEIR (302 aa). Residues histidine 78, histidine 260, and aspartate 264 each coordinate Zn(2+). Histidine 287 serves as the catalytic Proton donor. The segment at 303–461 is 3-hydroxyacyl-[acyl-carrier-protein] dehydratase; that stretch reads LHEIQAPTYD…EFMAQIVKNK (159 aa). Histidine 364 is an active-site residue.

This sequence in the N-terminal section; belongs to the LpxC family. In the C-terminal section; belongs to the thioester dehydratase family. It depends on Zn(2+) as a cofactor.

The protein resides in the cytoplasm. It catalyses the reaction a UDP-3-O-[(3R)-3-hydroxyacyl]-N-acetyl-alpha-D-glucosamine + H2O = a UDP-3-O-[(3R)-3-hydroxyacyl]-alpha-D-glucosamine + acetate. The catalysed reaction is a (3R)-hydroxyacyl-[ACP] = a (2E)-enoyl-[ACP] + H2O. It participates in glycolipid biosynthesis; lipid IV(A) biosynthesis; lipid IV(A) from (3R)-3-hydroxytetradecanoyl-[acyl-carrier-protein] and UDP-N-acetyl-alpha-D-glucosamine: step 2/6. Catalyzes the hydrolysis of UDP-3-O-myristoyl-N-acetylglucosamine to form UDP-3-O-myristoylglucosamine and acetate, the committed step in lipid A biosynthesis. Functionally, involved in unsaturated fatty acids biosynthesis. Catalyzes the dehydration of short chain beta-hydroxyacyl-ACPs and long chain saturated and unsaturated beta-hydroxyacyl-ACPs. The sequence is that of Bifunctional enzyme LpxC/FabZ (lpxC/fabZ) from Bacteroides thetaiotaomicron (strain ATCC 29148 / DSM 2079 / JCM 5827 / CCUG 10774 / NCTC 10582 / VPI-5482 / E50).